Here is a 126-residue protein sequence, read N- to C-terminus: Small nuclear ribonucleoprotein Sm D3 (126 aa).

Ser-2 is modified (N-acetylserine). Residues 5–77 form the Sm domain; the sequence is VPIKVLHEAE…IRFLILPDML (73 aa). 5 consecutive repeat copies span residues 110–111, 112–113, 114–115, 116–117, and 118–119. The segment at 110–119 is 5 X 2 AA tandem repeats of [RM]-G; required for interaction with SMN1; that stretch reads RGRGRGMGRG.

Belongs to the snRNP core protein family. In terms of assembly, core component of the spliceosomal U1, U2, U4 and U5 small nuclear ribonucleoproteins (snRNPs), the building blocks of the spliceosome. Most spliceosomal snRNPs contain a common set of Sm proteins, SNRPB, SNRPD1, SNRPD2, SNRPD3, SNRPE, SNRPF and SNRPG that assemble in a heptameric protein ring on the Sm site of the small nuclear RNA to form the core snRNP. Component of the U1 snRNP. The U1 snRNP is composed of the U1 snRNA and the 7 core Sm proteins SNRPB, SNRPD1, SNRPD2, SNRPD3, SNRPE, SNRPF and SNRPG, and at least three U1 snRNP-specific proteins SNRNP70/U1-70K, SNRPA/U1-A and SNRPC/U1-C. Component of the U4/U6-U5 tri-snRNP complex composed of the U4, U6 and U5 snRNAs and at least PRPF3, PRPF4, PRPF6, PRPF8, PRPF31, SNRNP200, TXNL4A, SNRNP40, SNRPB, SNRPD1, SNRPD2, SNRPD3, SNRPE, SNRPF, SNRPG, DDX23, CD2BP2, PPIH, SNU13, EFTUD2, SART1 and USP39, plus LSM2, LSM3, LSM4, LSM5, LSM6, LSM7 and LSM8. Component of the U7 snRNP complex, or U7 Sm protein core complex, that is composed of the U7 snRNA and at least LSM10, LSM11, SNRPB, SNRPD3, SNRPE, SNRPF and SNRPG; the complex does not contain SNRPD1 and SNRPD2. Component of the minor spliceosome, which splices U12-type introns. Part of the SMN-Sm complex that contains SMN1, GEMIN2/SIP1, DDX20/GEMIN3, GEMIN4, GEMIN5, GEMIN6, GEMIN7, GEMIN8, STRAP/UNRIP and the Sm proteins SNRPB, SNRPD1, SNRPD2, SNRPD3, SNRPE, SNRPF and SNRPG; catalyzes core snRNPs assembly. Forms a 6S pICln-Sm complex composed of CLNS1A/pICln, SNRPD1, SNRPD2, SNRPE, SNRPF and SNRPG; ring-like structure where CLNS1A/pICln mimics additional Sm proteins and which is unable to assemble into the core snRNP. Interacts (via C-terminus) with SMN1 (via Tudor domain); the interaction is direct. Post-translationally, methylated on arginine residues by PRMT5 and PRMT7; probable asymmetric dimethylation which is required for assembly and biogenesis of snRNPs.

The protein localises to the cytoplasm. It is found in the cytosol. The protein resides in the nucleus. Its function is as follows. Plays a role in pre-mRNA splicing as a core component of the spliceosomal U1, U2, U4 and U5 small nuclear ribonucleoproteins (snRNPs), the building blocks of the spliceosome. Component of both the pre-catalytic spliceosome B complex and activated spliceosome C complexes. As a component of the minor spliceosome, involved in the splicing of U12-type introns in pre-mRNAs. As part of the U7 snRNP it is involved in histone pre-mRNA 3'-end processing. The chain is Small nuclear ribonucleoprotein Sm D3 (SNRPD3) from Homo sapiens (Human).